The primary structure comprises 484 residues: Protein nucleotidyltransferase YdiU (484 aa).

ATP-binding residues include glycine 87, glycine 89, arginine 90, lysine 110, aspartate 122, glycine 123, arginine 173, and arginine 180. Catalysis depends on aspartate 249, which acts as the Proton acceptor. Mg(2+) contacts are provided by asparagine 250 and aspartate 259. Aspartate 259 contributes to the ATP binding site.

The protein belongs to the SELO family. It depends on Mg(2+) as a cofactor. Mn(2+) is required as a cofactor.

It catalyses the reaction L-seryl-[protein] + ATP = 3-O-(5'-adenylyl)-L-seryl-[protein] + diphosphate. The catalysed reaction is L-threonyl-[protein] + ATP = 3-O-(5'-adenylyl)-L-threonyl-[protein] + diphosphate. The enzyme catalyses L-tyrosyl-[protein] + ATP = O-(5'-adenylyl)-L-tyrosyl-[protein] + diphosphate. It carries out the reaction L-histidyl-[protein] + UTP = N(tele)-(5'-uridylyl)-L-histidyl-[protein] + diphosphate. It catalyses the reaction L-seryl-[protein] + UTP = O-(5'-uridylyl)-L-seryl-[protein] + diphosphate. The catalysed reaction is L-tyrosyl-[protein] + UTP = O-(5'-uridylyl)-L-tyrosyl-[protein] + diphosphate. Nucleotidyltransferase involved in the post-translational modification of proteins. It can catalyze the addition of adenosine monophosphate (AMP) or uridine monophosphate (UMP) to a protein, resulting in modifications known as AMPylation and UMPylation. The polypeptide is Protein nucleotidyltransferase YdiU (Alcanivorax borkumensis (strain ATCC 700651 / DSM 11573 / NCIMB 13689 / SK2)).